Here is a 130-residue protein sequence, read N- to C-terminus: MYRALTRDIEVTVEPYYLEEQSDPDDSRYVWGYRIIIANHSGLAVRLMTRYWHITDENGQVDEVSGPGVIGEQPLLNPGDTYEYSSGCPLDTPSGVMFGHYSMEAEGGETFDVAIPAFSLDSPGLVRTLN.

Residues 3-127 (RALTRDIEVT…FSLDSPGLVR (125 aa)) form the ApaG domain.

The chain is Protein ApaG from Rhizobium meliloti (strain 1021) (Ensifer meliloti).